We begin with the raw amino-acid sequence, 441 residues long: tRNA modification GTPase MnmE (441 aa).

3 residues coordinate (6S)-5-formyl-5,6,7,8-tetrahydrofolate: arginine 23, glutamate 81, and arginine 121. One can recognise a TrmE-type G domain in the interval glycine 219–glutamate 366. GTP is bound by residues asparagine 229–threonine 234, serine 248–threonine 254, and aspartate 273–glycine 276. Mg(2+)-binding residues include serine 233 and threonine 254. Lysine 441 contributes to the (6S)-5-formyl-5,6,7,8-tetrahydrofolate binding site.

This sequence belongs to the TRAFAC class TrmE-Era-EngA-EngB-Septin-like GTPase superfamily. TrmE GTPase family. In terms of assembly, homodimer. Heterotetramer of two MnmE and two MnmG subunits. K(+) serves as cofactor.

Its subcellular location is the cytoplasm. Its function is as follows. Exhibits a very high intrinsic GTPase hydrolysis rate. Involved in the addition of a carboxymethylaminomethyl (cmnm) group at the wobble position (U34) of certain tRNAs, forming tRNA-cmnm(5)s(2)U34. The sequence is that of tRNA modification GTPase MnmE from Methylobacterium radiotolerans (strain ATCC 27329 / DSM 1819 / JCM 2831 / NBRC 15690 / NCIMB 10815 / 0-1).